The sequence spans 351 residues: UDP-N-acetylenolpyruvoylglucosamine reductase (351 aa).

Residues 11 to 213 (GVGGSIACFI…KQVRDQVLRI (203 aa)) form the FAD-binding PCMH-type domain. Arg-158 is an active-site residue. Ser-239 acts as the Proton donor in catalysis. Glu-343 is an active-site residue.

The protein belongs to the MurB family. FAD serves as cofactor.

The protein resides in the cytoplasm. It carries out the reaction UDP-N-acetyl-alpha-D-muramate + NADP(+) = UDP-N-acetyl-3-O-(1-carboxyvinyl)-alpha-D-glucosamine + NADPH + H(+). It functions in the pathway cell wall biogenesis; peptidoglycan biosynthesis. In terms of biological role, cell wall formation. This Tropheryma whipplei (strain Twist) (Whipple's bacillus) protein is UDP-N-acetylenolpyruvoylglucosamine reductase.